Reading from the N-terminus, the 353-residue chain is Fe(3+) ions import ATP-binding protein FbpC 1 (353 aa).

The ABC transporter domain maps to 9-239; the sequence is VVFRNICKQF…PASAFIADFM (231 aa). An ATP-binding site is contributed by 41 to 48; that stretch reads GPSGCGKT.

It belongs to the ABC transporter superfamily. Fe(3+) ion importer (TC 3.A.1.10) family. In terms of assembly, the complex is composed of two ATP-binding proteins (FbpC), two transmembrane proteins (FbpB) and a solute-binding protein (FbpA).

Its subcellular location is the cell inner membrane. The catalysed reaction is Fe(3+)(out) + ATP + H2O = Fe(3+)(in) + ADP + phosphate + H(+). Part of the ABC transporter complex FbpABC involved in Fe(3+) ions import. Responsible for energy coupling to the transport system. The polypeptide is Fe(3+) ions import ATP-binding protein FbpC 1 (Rhizobium meliloti (strain 1021) (Ensifer meliloti)).